Here is a 176-residue protein sequence, read N- to C-terminus: Large ribosomal subunit protein uL6 (176 aa).

This sequence belongs to the universal ribosomal protein uL6 family. Part of the 50S ribosomal subunit.

Functionally, this protein binds to the 23S rRNA, and is important in its secondary structure. It is located near the subunit interface in the base of the L7/L12 stalk, and near the tRNA binding site of the peptidyltransferase center. This chain is Large ribosomal subunit protein uL6, found in Methanospirillum hungatei JF-1 (strain ATCC 27890 / DSM 864 / NBRC 100397 / JF-1).